The primary structure comprises 36 residues: Pancreatic polypeptide (36 aa).

Phe-36 carries the phenylalanine amide modification.

This sequence belongs to the NPY family.

It localises to the secreted. In terms of biological role, hormone secreted by pancreatic cells that acts as a regulator of pancreatic and gastrointestinal functions. This Alligator mississippiensis (American alligator) protein is Pancreatic polypeptide (ppy).